Here is a 295-residue protein sequence, read N- to C-terminus: Biliverdin reductase A (295 aa).

The propeptide occupies 1–2 (MS). Residues 18 to 19 (RA), 76 to 79 (SSSH), and Tyr-97 contribute to the NAD(+) site. Residue Ser-154 is modified to Phosphoserine. An NAD(+)-binding site is contributed by Ser-167. Thr-173 carries the phosphothreonine modification. Phosphoserine is present on residues Ser-177 and Ser-229. Residues Lys-247 and Lys-252 each carry the N6-acetyllysine modification. His-279, Cys-280, Cys-291, and His-292 together coordinate Zn(2+).

Belongs to the Gfo/Idh/MocA family. Biliverdin reductase subfamily. Monomer. Requires Zn(2+) as cofactor.

Its subcellular location is the cytoplasm. It localises to the cytosol. The enzyme catalyses (4Z,15Z)-bilirubin IXalpha + NAD(+) = biliverdin IXalpha + NADH + H(+). It catalyses the reaction (4Z,15Z)-bilirubin IXalpha + NADP(+) = biliverdin IXalpha + NADPH + H(+). It functions in the pathway porphyrin-containing compound metabolism; protoheme degradation. In terms of biological role, reduces the gamma-methene bridge of the open tetrapyrrole, biliverdin IXalpha, to bilirubin with the concomitant oxidation of a NADH or NADPH cofactor. Does not reduce bilirubin IXbeta. Uses the reactants NADH or NADPH depending on the pH; NADH is used at the acidic pH range (6-6.9) and NADPH at the alkaline range (8.5-8.7). NADPH, however, is the probable reactant in biological systems. This chain is Biliverdin reductase A, found in Mus musculus (Mouse).